Here is a 1000-residue protein sequence, read N- to C-terminus: Ribosome assembly protein 1 (1000 aa).

The 230-residue stretch at 17 to 246 (ENIRNFTLLA…YEKKLGLKQK (230 aa)) folds into the tr-type G domain. Residues 26 to 33 (AHVDHGKT), 100 to 104 (DSPGH), and 154 to 157 (NKMD) contribute to the GTP site.

This sequence belongs to the TRAFAC class translation factor GTPase superfamily. Classic translation factor GTPase family.

The protein resides in the cytoplasm. It catalyses the reaction GTP + H2O = GDP + phosphate + H(+). Its activity is regulated as follows. GTPase activity is stimulated in the presence of 60S subunits. Functionally, GTPase involved in the biogenesis of the 60S ribosomal subunit and translational activation of ribosomes. Together with sdo1, may trigger the GTP-dependent release of tif6 from 60S pre-ribosomes in the cytoplasm, thereby activating ribosomes for translation competence by allowing 80S ribosome assembly and facilitating tif6 recycling to the nucleus, where it is required for 60S rRNA processing and nuclear export. Inhibits GTPase activity of ribosome-bound EF-2. This is Ribosome assembly protein 1 (ria1) from Schizosaccharomyces pombe (strain 972 / ATCC 24843) (Fission yeast).